The chain runs to 244 residues: Phosphoadenosine 5'-phosphosulfate reductase (244 aa).

Cysteine 239 (nucleophile; cysteine thiosulfonate intermediate) is an active-site residue.

This sequence belongs to the PAPS reductase family. CysH subfamily.

Its subcellular location is the cytoplasm. The enzyme catalyses [thioredoxin]-disulfide + sulfite + adenosine 3',5'-bisphosphate + 2 H(+) = [thioredoxin]-dithiol + 3'-phosphoadenylyl sulfate. It functions in the pathway sulfur metabolism; hydrogen sulfide biosynthesis; sulfite from sulfate: step 3/3. Catalyzes the formation of sulfite from phosphoadenosine 5'-phosphosulfate (PAPS) using thioredoxin as an electron donor. This chain is Phosphoadenosine 5'-phosphosulfate reductase, found in Salmonella schwarzengrund (strain CVM19633).